The primary structure comprises 118 residues: Small ribosomal subunit protein uS13 (118 aa).

Residues 92–118 (RRGLPVRGQRTKTNARTRKGPRKPIKK) are disordered.

It belongs to the universal ribosomal protein uS13 family. In terms of assembly, part of the 30S ribosomal subunit. Forms a loose heterodimer with protein S19. Forms two bridges to the 50S subunit in the 70S ribosome.

In terms of biological role, located at the top of the head of the 30S subunit, it contacts several helices of the 16S rRNA. In the 70S ribosome it contacts the 23S rRNA (bridge B1a) and protein L5 of the 50S subunit (bridge B1b), connecting the 2 subunits; these bridges are implicated in subunit movement. Contacts the tRNAs in the A and P-sites. This Yersinia enterocolitica serotype O:8 / biotype 1B (strain NCTC 13174 / 8081) protein is Small ribosomal subunit protein uS13.